A 472-amino-acid chain; its full sequence is Glutamine synthetase (472 aa).

One can recognise a GS beta-grasp domain in the interval 13–101; it reads SKARFVDLRF…TCDVIDPADG (89 aa). One can recognise a GS catalytic domain in the interval 108–472; sequence PRSIARRAEA…PLEFEMYYSL (365 aa). Positions 133 and 135 each coordinate Mg(2+). Glutamate 211 contributes to the ATP binding site. Positions 216 and 224 each coordinate Mg(2+). Residues 268–269 and glycine 269 contribute to the L-glutamate site; that span reads NG. Residue histidine 273 participates in Mg(2+) binding. ATP is bound by residues 275–277 and serine 277; that span reads HQS. L-glutamate is bound by residues arginine 325, glutamate 331, and arginine 343. ATP-binding residues include arginine 343, arginine 348, and lysine 356. Residue glutamate 361 participates in Mg(2+) binding. Arginine 363 provides a ligand contact to L-glutamate. Tyrosine 401 carries the O-AMP-tyrosine modification.

This sequence belongs to the glutamine synthetase family. As to quaternary structure, oligomer of 12 subunits arranged in the form of two hexameric ring. The cofactor is Mg(2+).

It localises to the cytoplasm. The enzyme catalyses L-glutamate + NH4(+) + ATP = L-glutamine + ADP + phosphate + H(+). Its activity is regulated as follows. The activity of this enzyme could be controlled by adenylation under conditions of abundant glutamine. Functionally, catalyzes the ATP-dependent biosynthesis of glutamine from glutamate and ammonia. In Neisseria gonorrhoeae, this protein is Glutamine synthetase.